The following is a 988-amino-acid chain: MTEAKSYKDTVNLPQTRFDMRANANKREPEIQQYWQEKGIYADLADNNPKDLFVLHDGPPYANGALHMGHALNKVLKDIINKYKLLQGHKVHYVPGWDCHGLPIELKVLQSLKSSERAELTPLTLRHKARDFALKAQQEQAVGFQRYGIWGDWKKPYLTLTPEYEAAQIGVFGAMALKGYIYRGLKPVHWSPSSRTALAEAELEYPEGHTSRSIYVSFPITQAGEKAAEILAPYIDDLAVAIWTTTPWTLPGNLAVALNPELTYAVVETESHIFHRSYLIVALDLVEKLSETFGVKLTVKVTLQGESLENTCYQHPLFDRVSPIVIGGDYVTTESGTGLVHTAPGHGQEDYVVGQRYGLPILSPVDAAGNLTEEAGKFAGLNVLNDANEAIINALQDQKVLLKEEAYEHKYPYDWRTKKPTIFRATEQWFASVEGFRDQALKAIKEVTWIPTQGENRITPMVGDRSDWCISRQRAWGVPIPVFYDEETSEPLLTEETINHVQQIIAEKGSDAWWELTVEELLPEAYRNNGRTYRKGEDTMDVWFDSGSSWAAVANAKNRPLKYPVDMYLEGSDQHRGWFQSSLLTSVAVNGIAPYKTVLTHGFVLDEKGHKMSKSLGNVVDPYQIINGGKNQKQEPAYGADVLRLWVASVDYANDVPIGQGILKQLVDIRNKIRNTARFLLGNLHDFNPETDAVAYEDLPELDRYMLHRMTEVFTEVTEAYESFQFFKFFQTVQNFCVVDLSNFYLDIAKDRLYISAPNAPRRRSCQTILQLALENLTKAIAPVLCHLAEDIWQFLPYEKPTESVFQSGWVNLDAQWQQPQLAQKWVSLRQLRDGINQLLEQARRDKVIGSSLEAKLIIVDPRTAESGTDEKQGENFVHWFYGWLENFNEPTFDPNDRKISLRNIFLTSQVEFIKSAEIEPSFTYEETVVINLERHDNNIRTKPIKIIVTKADGHKCERCWNYSTQVGSFSDDPTICERCNEALQGNF.

The short motif at 60–70 is the 'HIGH' region element; sequence PYANGALHMGH. Glu570 contacts L-isoleucyl-5'-AMP. Positions 611-615 match the 'KMSKS' region motif; that stretch reads KMSKS. Residue Lys614 participates in ATP binding. Zn(2+)-binding residues include Cys957, Cys960, Cys977, and Cys980.

Belongs to the class-I aminoacyl-tRNA synthetase family. IleS type 1 subfamily. As to quaternary structure, monomer. Zn(2+) serves as cofactor.

The protein localises to the cytoplasm. The enzyme catalyses tRNA(Ile) + L-isoleucine + ATP = L-isoleucyl-tRNA(Ile) + AMP + diphosphate. Catalyzes the attachment of isoleucine to tRNA(Ile). As IleRS can inadvertently accommodate and process structurally similar amino acids such as valine, to avoid such errors it has two additional distinct tRNA(Ile)-dependent editing activities. One activity is designated as 'pretransfer' editing and involves the hydrolysis of activated Val-AMP. The other activity is designated 'posttransfer' editing and involves deacylation of mischarged Val-tRNA(Ile). The chain is Isoleucine--tRNA ligase from Synechocystis sp. (strain ATCC 27184 / PCC 6803 / Kazusa).